The following is a 74-amino-acid chain: UPF0346 protein SE_1114 (74 aa).

The protein belongs to the UPF0346 family.

The chain is UPF0346 protein SE_1114 from Staphylococcus epidermidis (strain ATCC 12228 / FDA PCI 1200).